A 282-amino-acid polypeptide reads, in one-letter code: 3-methyl-2-oxobutanoate hydroxymethyltransferase (282 aa).

Asp-63 and Asp-102 together coordinate Mg(2+). 3-methyl-2-oxobutanoate-binding positions include Asp-63 to Ser-64, Asp-102, and Lys-132. Position 134 (Glu-134) interacts with Mg(2+). The active-site Proton acceptor is Glu-200.

Belongs to the PanB family. As to quaternary structure, homodecamer; pentamer of dimers. It depends on Mg(2+) as a cofactor.

The protein resides in the cytoplasm. The catalysed reaction is 3-methyl-2-oxobutanoate + (6R)-5,10-methylene-5,6,7,8-tetrahydrofolate + H2O = 2-dehydropantoate + (6S)-5,6,7,8-tetrahydrofolate. It functions in the pathway cofactor biosynthesis; (R)-pantothenate biosynthesis; (R)-pantoate from 3-methyl-2-oxobutanoate: step 1/2. Its function is as follows. Catalyzes the reversible reaction in which hydroxymethyl group from 5,10-methylenetetrahydrofolate is transferred onto alpha-ketoisovalerate to form ketopantoate. In Mycobacterium sp. (strain JLS), this protein is 3-methyl-2-oxobutanoate hydroxymethyltransferase.